The chain runs to 29 residues: Glucagon (29 aa).

The protein belongs to the glucagon family.

It localises to the secreted. Its function is as follows. Glucagon plays a key role in glucose metabolism and homeostasis. Regulates blood glucose by increasing gluconeogenesis and decreasing glycolysis. This chain is Glucagon (gcg), found in Lampetra fluviatilis (European river lamprey).